We begin with the raw amino-acid sequence, 289 residues long: Elongation factor Ts (289 aa).

Positions 80-83 are involved in Mg(2+) ion dislocation from EF-Tu; sequence TDFV.

The protein belongs to the EF-Ts family.

It is found in the cytoplasm. In terms of biological role, associates with the EF-Tu.GDP complex and induces the exchange of GDP to GTP. It remains bound to the aminoacyl-tRNA.EF-Tu.GTP complex up to the GTP hydrolysis stage on the ribosome. This Francisella tularensis subsp. tularensis (strain FSC 198) protein is Elongation factor Ts.